A 434-amino-acid chain; its full sequence is Histidinol dehydrogenase (434 aa).

NAD(+) is bound by residues Tyr-130, Gln-188, and Asn-211. Positions 237, 259, and 262 each coordinate substrate. The Zn(2+) site is built by Gln-259 and His-262. Residues Glu-326 and His-327 each act as proton acceptor in the active site. His-327, Asp-360, Glu-414, and His-419 together coordinate substrate. Asp-360 contributes to the Zn(2+) binding site. His-419 lines the Zn(2+) pocket.

This sequence belongs to the histidinol dehydrogenase family. In terms of assembly, homodimer. Requires Zn(2+) as cofactor.

The catalysed reaction is L-histidinol + 2 NAD(+) + H2O = L-histidine + 2 NADH + 3 H(+). It participates in amino-acid biosynthesis; L-histidine biosynthesis; L-histidine from 5-phospho-alpha-D-ribose 1-diphosphate: step 9/9. In terms of biological role, catalyzes the sequential NAD-dependent oxidations of L-histidinol to L-histidinaldehyde and then to L-histidine. The chain is Histidinol dehydrogenase from Escherichia coli O6:H1 (strain CFT073 / ATCC 700928 / UPEC).